A 416-amino-acid chain; its full sequence is Splicing factor U2AF 50 kDa subunit (416 aa).

Basic and acidic residues predominate over residues 1–10 (MGYDDRERDR). The interval 1–47 (MGYDDRERDRERRRHRSRSRDRHRERSRDRRHHRNSRRKPSLYWDVP) is disordered. Composition is skewed to basic residues over residues 11-21 (ERRRHRSRSRD) and 29-40 (DRRHHRNSRRKP). 3 RRM domains span residues 93–175 (RRLY…RPHD), 207–285 (HKIF…RASV), and 318–408 (EVLC…YFDP).

The protein belongs to the splicing factor SR family. Forms a heterodimer with the U2AF small subunit.

Its subcellular location is the nucleus. Functionally, necessary for the splicing of pre-mRNA. Binds to the polypyrimidine tract of introns early during spliceosome assembly. The polypeptide is Splicing factor U2AF 50 kDa subunit (U2af50) (Drosophila melanogaster (Fruit fly)).